Reading from the N-terminus, the 1325-residue chain is Sperm-specific sodium:proton exchanger (1325 aa).

The signal sequence occupies residues 1–29 (MKKRVVKLRELVPAVAALAVAVLIQSATG). The tract at residues 28 to 68 (TGSSGGSGHTPTTQATHADDHDLTTHNGTEEHDDGHDDGHD) is disordered. The Extracellular segment spans residues 30–76 (SSGGSGHTPTTQATHADDHDLTTHNGTEEHDDGHDDGHDDLHAHAPK). A compositionally biased stretch (basic and acidic residues) spans 44-68 (HADDHDLTTHNGTEEHDDGHDDGHD). Residue His73 participates in a 1,2-diacylglycero-3-phosphate binding. Residues 77-96 (VIVFISGSCLFGAISRSLFK) traverse the membrane as a helical segment. Residues 97-101 (KLPIP) are Cytoplasmic-facing. The chain crosses the membrane as a helical span at residues 102-119 (YTVVLLILGAILGVVASN). Over 120–135 (VPLVEEHTRDVAHMDP) the chain is Extracellular. A helical membrane pass occupies residues 136–152 (HVLLQIFLPVLIFESAF). The Cytoplasmic segment spans residues 153 to 162 (AMDVHTFMRS). A helical membrane pass occupies residues 163 to 188 (FSQVCILALFGLVVASVLTAVLAMNL). The tract at residues 163–250 (FSQVCILALF…AIVIFNVFMK (88 aa)) is transport core domain. Residues 189–194 (FNYNWN) are Extracellular-facing. The chain crosses the membrane as a helical span at residues 195–220 (FSEAMMFGAIMSATDPVAVVALLKDL). The Cytoplasmic portion of the chain corresponds to 221–223 (GAS). A helical transmembrane segment spans residues 224-249 (KQLGTIIEGESLLNDGCAIVIFNVFM). The Essential for sodium:proton exchange signature appears at 237-238 (ND). At 250–260 (KMVFFPQLTST) the chain is on the extracellular side. A helical membrane pass occupies residues 261–292 (VGQNVLYFLQVAVAGPLWGYAVAKVTVFFLSH). The Cytoplasmic segment spans residues 293–296 (IFND). A helical membrane pass occupies residues 297–319 (ALVEITITLAATYLTYYIGDIWL). Residues 320–322 (EVS) are Extracellular-facing. A helical membrane pass occupies residues 323–336 (GVLAVVVLGLIVNA). Over 337–343 (EKTSISP) the chain is Cytoplasmic. The chain crosses the membrane as a helical span at residues 344–377 (EVEVFLHRFWEMLAYLANTLIFMMVGVVVTQKAL). Residues 378–382 (VAVDK) lie on the Extracellular side of the membrane. The chain crosses the membrane as a helical span at residues 383–412 (MDWFYLIILYLAITIIRGMVISLFSPILSR). Residues 383 to 481 (MDWFYLIILY…TTIQTLLRIL (99 aa)) form a transport core domain region. At 413 to 418 (IGYGLT) the chain is on the cytoplasmic side. A helical membrane pass occupies residues 419–446 (WRNAVIMTWGGLRGAVGLALALVVENLA). The Extracellular portion of the chain corresponds to 447-450 (GNDV). A helical membrane pass occupies residues 451-481 (IGSKFLFHTAGIVVLTLVINATTIQTLLRIL). The Cytoplasmic segment spans residues 482 to 677 (GMSDISIPKR…GKLMYKICHH (196 aa)). Residues 575–620 (FADMMEEARLRMLKAEKISYWKQFEHGMLAREALRLLVQHAEVAAD) form an interacts with the S4 segment of voltage sensor domain region. The interval 605–620 (REALRLLVQHAEVAAD) is interacts with the transport core domain; can lock the transporter in the inward conformation. The chain crosses the membrane as a helical span at residues 678–708 (MAFEVTINIAIVLNIVPIIMEFVVQDKMASV). Topologically, residues 709–724 (STMAAPGSTVSSEPSS) are extracellular. Residues 725-752 (LQKIEDALRISNYVFFVIYAIEAIVKIL) traverse the membrane as a helical segment. Residues 753 to 760 (GLGRHYIV) lie on the Cytoplasmic side of the membrane. The helical transmembrane segment at 761 to 784 (SHWNKFDAFILVVALVDIIIAETL) threads the bilayer. The Extracellular portion of the chain corresponds to 785–795 (LKGSITINLSS). A helical membrane pass occupies residues 796 to 822 (IKVVKLFRLLRGLRMLRLTKALIPKLI). The tract at residues 796–857 (IKVVKLFRLL…EEVGKIIDRM (62 aa)) is S4 segment of voltage sensor domain. Residues 823–1325 (LVVNGKINNQ…EEGAAPRVNV (503 aa)) lie on the Cytoplasmic side of the membrane. Residues 860–919 (NKKILRELKHISETGRLQVVKELGLLQREHPGIAVSVKTRQAIRTILNHSRETIHELQGA) are interacts with the S4 segment of voltage sensor domain. A cNMP-binding domain region spans residues 968–1068 (KLIDFIKARA…CETTVQVYFI (101 aa)). Gly1043 serves as a coordination point for 3',5'-cyclic AMP. 3',5'-cyclic GMP is bound by residues Gly1043, Glu1044, and Met1045. 3',5'-cyclic AMP is bound by residues Met1045, Gly1046, Arg1053, and Asn1054. 3',5'-cyclic GMP-binding residues include Arg1053 and Asn1054. The segment at 1237 to 1325 (MLSRKSSGAA…EEGAAPRVNV (89 aa)) is disordered. Over residues 1266 to 1280 (VSPSVPTKTTPKPKS) the composition is skewed to low complexity.

This sequence belongs to the monovalent cation:proton antiporter 1 (CPA1) transporter (TC 2.A.36) family. As to quaternary structure, homodimer; the dimerization is stabilized in the presence of phosphatidic acids.

It is found in the cell projection. The protein resides in the cilium. It localises to the flagellum membrane. It carries out the reaction Na(+)(in) + H(+)(out) = Na(+)(out) + H(+)(in). Its activity is regulated as follows. Gated by voltage and stimulated by cyclic nucleotides which shift the activation voltage closer to resting membrane potential. Not inhibited by common sodium:proton exchanger inhibitors such as amiloride. Its function is as follows. Electroneutral sodium:proton antiporter that regulates intracellular pH of sperm along with capacitation and fertility. Activated in response to egg-derived chemoattractants, couples membrane voltage to sodium:proton exchange and transduces membrane hyperpolarization to cytoplasmic alkalization to cAMP signaling and ultimately to sperm motility. The polypeptide is Sperm-specific sodium:proton exchanger (Strongylocentrotus purpuratus (Purple sea urchin)).